Reading from the N-terminus, the 467-residue chain is Dihydroorotase (467 aa).

Residues His-60 and His-62 each contribute to the Zn(2+) site. Substrate-binding positions include His-62–Arg-64 and Asn-94. Residues Glu-146, His-180, His-234, and Asp-313 each coordinate Zn(2+). Residue Asp-313 is part of the active site. His-317 contributes to the substrate binding site. A disordered region spans residues Lys-439 to Asp-467. Basic and acidic residues predominate over residues Gly-441–Glu-454. Acidic residues predominate over residues Glu-455–Asp-467.

This sequence belongs to the metallo-dependent hydrolases superfamily. DHOase family. Class I DHOase subfamily. Requires Zn(2+) as cofactor.

The enzyme catalyses (S)-dihydroorotate + H2O = N-carbamoyl-L-aspartate + H(+). The protein operates within pyrimidine metabolism; UMP biosynthesis via de novo pathway; (S)-dihydroorotate from bicarbonate: step 3/3. Catalyzes the reversible cyclization of carbamoyl aspartate to dihydroorotate. The sequence is that of Dihydroorotase from Methanosarcina acetivorans (strain ATCC 35395 / DSM 2834 / JCM 12185 / C2A).